A 522-amino-acid chain; its full sequence is Cytochrome P450 1A3 (522 aa).

Phe229 is a substrate binding site. Cys463 lines the heme pocket.

The protein belongs to the cytochrome P450 family. Heme serves as cofactor. In terms of tissue distribution, liver.

The protein localises to the endoplasmic reticulum membrane. The protein resides in the microsome membrane. It carries out the reaction an organic molecule + reduced [NADPH--hemoprotein reductase] + O2 = an alcohol + oxidized [NADPH--hemoprotein reductase] + H2O + H(+). Functionally, cytochromes P450 are a group of heme-thiolate monooxygenases. They oxidize a variety of structurally unrelated compounds, including steroids, fatty acids, and xenobiotics. This is Cytochrome P450 1A3 (cyp1a3) from Oncorhynchus mykiss (Rainbow trout).